Consider the following 265-residue polypeptide: Hydroxyethylthiazole kinase 2 (265 aa).

Position 39 (M39) interacts with substrate. ATP contacts are provided by K115 and T168. G195 is a substrate binding site.

This sequence belongs to the Thz kinase family. Mg(2+) serves as cofactor.

It carries out the reaction 5-(2-hydroxyethyl)-4-methylthiazole + ATP = 4-methyl-5-(2-phosphooxyethyl)-thiazole + ADP + H(+). It functions in the pathway cofactor biosynthesis; thiamine diphosphate biosynthesis; 4-methyl-5-(2-phosphoethyl)-thiazole from 5-(2-hydroxyethyl)-4-methylthiazole: step 1/1. In terms of biological role, catalyzes the phosphorylation of the hydroxyl group of 4-methyl-5-beta-hydroxyethylthiazole (THZ). The polypeptide is Hydroxyethylthiazole kinase 2 (Clostridium botulinum (strain ATCC 19397 / Type A)).